The following is a 113-amino-acid chain: Hydrogenase maturation factor HypA (113 aa).

A Ni(2+)-binding site is contributed by His2. Residues Cys73, Cys76, Cys89, and Cys92 each coordinate Zn(2+).

Belongs to the HypA/HybF family.

In terms of biological role, involved in the maturation of [NiFe] hydrogenases. Required for nickel insertion into the metal center of the hydrogenase. This Beijerinckia indica subsp. indica (strain ATCC 9039 / DSM 1715 / NCIMB 8712) protein is Hydrogenase maturation factor HypA.